The primary structure comprises 368 residues: Quinolinate synthase (368 aa).

Iminosuccinate is bound by residues H46 and S63. C110 provides a ligand contact to [4Fe-4S] cluster. Residues 141-143 (YVN) and S162 each bind iminosuccinate. [4Fe-4S] cluster is bound at residue C230. Residues 256–258 (HPE) and T273 each bind iminosuccinate. C320 lines the [4Fe-4S] cluster pocket.

This sequence belongs to the quinolinate synthase family. Type 3 subfamily. [4Fe-4S] cluster is required as a cofactor.

It is found in the cytoplasm. It carries out the reaction iminosuccinate + dihydroxyacetone phosphate = quinolinate + phosphate + 2 H2O + H(+). It functions in the pathway cofactor biosynthesis; NAD(+) biosynthesis; quinolinate from iminoaspartate: step 1/1. Its function is as follows. Catalyzes the condensation of iminoaspartate with dihydroxyacetone phosphate to form quinolinate. This is Quinolinate synthase from Bacillus anthracis (strain A0248).